The chain runs to 278 residues: Phage-like element PBSX protein XkdB (278 aa).

The H-T-H motif DNA-binding region spans 58 to 80; that stretch reads LKAREMAAVFGVSEKTVRRWLEL. Disordered regions lie at residues 117 to 136 and 239 to 278; these read SLKERPFSPQTPDTNDRTDI and QHERMKKHDKTNNRTDFGRAEKRETSITGGQTGRIRRKQV. Residues 248-263 are compositionally biased toward basic and acidic residues; it reads KTNNRTDFGRAEKRET.

This sequence to B.subtilis YqaL.

This is Phage-like element PBSX protein XkdB (xkdB) from Bacillus subtilis (strain 168).